The chain runs to 2157 residues: Genome polyprotein (2157 aa).

Gly2 carries N-myristoyl glycine; by host lipidation. Residues 2–1470 (GAQVSRQNVG…DLSIANSIIT (1469 aa)) are Cytoplasmic-facing. The interval 567–584 (PIEQNPVENYIDEVLNEV) is amphipathic alpha-helix. Catalysis depends on for protease 2A activity residues His875 and Asp892. 2 residues coordinate Zn(2+): Cys909 and Cys911. The For protease 2A activity role is filled by Cys963. Zn(2+) is bound by residues Cys969 and His971. Residues 1095 to 1164 (SDSWLKKFTE…NLRAADNATQ (70 aa)) are membrane-binding. The segment at 1095 to 1228 (SDSWLKKFTE…PPGTGKSITT (134 aa)) is oligomerization. The interval 1116–1120 (GNKIS) is RNA-binding. One can recognise an SF3 helicase domain in the interval 1188 to 1350 (EAKRIKVLYN…YKDAQGKLNV (163 aa)). The Zn(2+) site is built by Cys1357, Cys1368, and Cys1373. The C4-type; degenerate zinc finger occupies 1357–1373 (CNVNTKIGNAKCCPFVC). Positions 1400-1407 (EDKRRRQV) are RNA-binding. Residues 1411–1416 (MSAIFQ) are oligomerization. An intramembrane segment occupies 1471-1486 (IIANIISIAGIIFVIY). Residues 1487–2157 (KLFCTLQGPY…LLKHEWYEKF (671 aa)) are Cytoplasmic-facing. The residue at position 1496 (Tyr1496) is an O-(5'-phospho-RNA)-tyrosine. Residues 1515-1693 (GPEEEFGRSI…FSAMLLRSYF (179 aa)) enclose the Peptidase C3 domain. Catalysis depends on for protease 3C activity residues His1554, Glu1585, and Cys1661. The RdRp catalytic domain occupies 1925 to 2038 (DCIMAFDYTN…SYKYTLDMEA (114 aa)). The Mg(2+) site is built by Asp1931 and Asp2024.

It belongs to the picornaviruses polyprotein family. In terms of assembly, interacts with capsid protein VP1 and capsid protein VP3 to form heterotrimeric protomers. As to quaternary structure, interacts with capsid protein VP0, and capsid protein VP3 to form heterotrimeric protomers. Five protomers subsequently associate to form pentamers which serve as building blocks for the capsid. Interacts with capsid protein VP2, capsid protein VP3 and capsid protein VP4 following cleavage of capsid protein VP0. Interacts with capsid protein VP1 and capsid protein VP3 in the mature capsid. In terms of assembly, interacts with capsid protein VP0 and capsid protein VP1 to form heterotrimeric protomers. Five protomers subsequently associate to form pentamers which serve as building blocks for the capsid. Interacts with capsid protein VP4 in the mature capsid. Interacts with protein 2C; this interaction may be important for virion morphogenesis. As to quaternary structure, interacts with capsid protein VP1 and capsid protein VP3. Homodimer. In terms of assembly, homohexamer; forms a hexameric ring structure with 6-fold symmetry characteristic of AAA+ ATPases. Interacts (via N-terminus) with host RTN3 (via reticulon domain); this interaction is important for viral replication. Interacts with capsid protein VP3; this interaction may be important for virion morphogenesis. As to quaternary structure, interacts with protein 3CD. Homodimer. Interacts with host GBF1. Interacts (via GOLD domain) with host ACBD3 (via GOLD domain); this interaction allows the formation of a viral protein 3A/ACBD3 heterotetramer with a 2:2 stoichiometry, which will stimulate the recruitment of host PI4KB in order to synthesize PI4P at the viral RNA replication sites. In terms of assembly, interacts with RNA-directed RNA polymerase. As to quaternary structure, interacts with protein 3AB and with RNA-directed RNA polymerase. Interacts with Viral protein genome-linked and with protein 3CD. It depends on Mg(2+) as a cofactor. Post-translationally, specific enzymatic cleavages in vivo by the viral proteases yield processing intermediates and the mature proteins. In terms of processing, myristoylation is required for the formation of pentamers during virus assembly. Further assembly of 12 pentamers and a molecule of genomic RNA generates the provirion. During virion maturation, immature virions are rendered infectious following cleavage of VP0 into VP4 and VP2. This maturation seems to be an autocatalytic event triggered by the presence of RNA in the capsid and it is followed by a conformational change infectious virion. Post-translationally, myristoylation is required during RNA encapsidation and formation of the mature virus particle. In terms of processing, VPg is uridylylated by the polymerase into VPg-pUpU. This acts as a nucleotide-peptide primer for the genomic RNA replication.

The protein resides in the virion. The protein localises to the host cytoplasm. Its subcellular location is the host cytoplasmic vesicle membrane. It is found in the host nucleus. It carries out the reaction a ribonucleoside 5'-triphosphate + H2O = a ribonucleoside 5'-diphosphate + phosphate + H(+). The catalysed reaction is Selective cleavage of Tyr-|-Gly bond in the picornavirus polyprotein.. It catalyses the reaction RNA(n) + a ribonucleoside 5'-triphosphate = RNA(n+1) + diphosphate. The enzyme catalyses Selective cleavage of Gln-|-Gly bond in the poliovirus polyprotein. In other picornavirus reactions Glu may be substituted for Gln, and Ser or Thr for Gly.. With respect to regulation, replication or transcription is subject to high level of random mutations by the nucleotide analog ribavirin. In terms of biological role, forms an icosahedral capsid of pseudo T=3 symmetry with capsid proteins VP2 and VP3. The capsid is 300 Angstroms in diameter, composed of 60 copies of each capsid protein and enclosing the viral positive strand RNA genome. Capsid protein VP1 mainly forms the vertices of the capsid. Capsid protein VP1 interacts with host cell receptor to provide virion attachment to target host cells. This attachment induces virion internalization. Tyrosine kinases are probably involved in the entry process. After binding to its receptor, the capsid undergoes conformational changes. Capsid protein VP1 N-terminus (that contains an amphipathic alpha-helix) and capsid protein VP4 are externalized. Together, they shape a pore in the host membrane through which viral genome is translocated to host cell cytoplasm. Functionally, forms an icosahedral capsid of pseudo T=3 symmetry with capsid proteins VP2 and VP3. The capsid is 300 Angstroms in diameter, composed of 60 copies of each capsid protein and enclosing the viral positive strand RNA genome. Its function is as follows. Lies on the inner surface of the capsid shell. After binding to the host receptor, the capsid undergoes conformational changes. Capsid protein VP4 is released, Capsid protein VP1 N-terminus is externalized, and together, they shape a pore in the host membrane through which the viral genome is translocated into the host cell cytoplasm. Component of immature procapsids, which is cleaved into capsid proteins VP4 and VP2 after maturation. Allows the capsid to remain inactive before the maturation step. In terms of biological role, cysteine protease that cleaves viral polyprotein and specific host proteins. It is responsible for the autocatalytic cleavage between the P1 and P2 regions, which is the first cleavage occurring in the polyprotein. Also cleaves the host translation initiation factor EIF4G1, in order to shut down the capped cellular mRNA translation. Inhibits the host nucleus-cytoplasm protein and RNA trafficking by cleaving host members of the nuclear pores. Counteracts stress granule formation probably by antagonizing its assembly or promoting its dissassembly. Functionally, plays an essential role in the virus replication cycle by acting as a viroporin. Creates a pore in the host endoplasmic reticulum and as a consequence releases Ca2+ in the cytoplasm of infected cell. In turn, high levels of cytoplasmic calcium may trigger membrane trafficking and transport of viral ER-associated proteins to viroplasms, sites of viral genome replication. Its function is as follows. Induces and associates with structural rearrangements of intracellular membranes. Displays RNA-binding, nucleotide binding and NTPase activities. May play a role in virion morphogenesis and viral RNA encapsidation by interacting with the capsid protein VP3. Localizes the viral replication complex to the surface of membranous vesicles. Together with protein 3CD binds the Cis-Active RNA Element (CRE) which is involved in RNA synthesis initiation. Acts as a cofactor to stimulate the activity of 3D polymerase, maybe through a nucleid acid chaperone activity. In terms of biological role, localizes the viral replication complex to the surface of membranous vesicles. It inhibits host cell endoplasmic reticulum-to-Golgi apparatus transport and causes the disassembly of the Golgi complex, possibly through GBF1 interaction. This would result in depletion of MHC, trail receptors and IFN receptors at the host cell surface. Plays an essential role in viral RNA replication by recruiting ACBD3 and PI4KB at the viral replication sites, thereby allowing the formation of the rearranged membranous structures where viral replication takes place. Functionally, acts as a primer for viral RNA replication and remains covalently bound to viral genomic RNA. VPg is uridylylated prior to priming replication into VPg-pUpU. The oriI viral genomic sequence may act as a template for this. The VPg-pUpU is then used as primer on the genomic RNA poly(A) by the RNA-dependent RNA polymerase to replicate the viral genome. During genome replication, the VPg-RNA linkage is removed by the host TDP2, thereby accelerating replication. During the late stage of the replication cycle, host TDP2 is excluded from sites of viral RNA synthesis and encapsidation, allowing for the generation of progeny virions. Its function is as follows. Involved in the viral replication complex and viral polypeptide maturation. It exhibits protease activity with a specificity and catalytic efficiency that is different from protease 3C. Protein 3CD lacks polymerase activity. Protein 3CD binds to the 5'UTR of the viral genome. Replicates the viral genomic RNA on the surface of intracellular membranes. May form linear arrays of subunits that propagate along a strong head-to-tail interaction called interface-I. Covalently attaches UMP to a tyrosine of VPg, which is used to prime RNA synthesis. The positive stranded RNA genome is first replicated at virus induced membranous vesicles, creating a dsRNA genomic replication form. This dsRNA is then used as template to synthesize positive stranded RNA genomes. ss(+)RNA genomes are either translated, replicated or encapsidated. In terms of biological role, major viral protease that mediates proteolytic processing of the polyprotein. Cleaves host EIF5B, contributing to host translation shutoff. Also cleaves host PABPC1, contributing to host translation shutoff. Cleaves host NLRP1, triggers host N-glycine-mediated degradation of the autoinhibitory NLRP1 N-terminal fragment. The polypeptide is Genome polyprotein (Homo sapiens (Human)).